Reading from the N-terminus, the 369-residue chain is 3-isopropylmalate dehydrogenase (369 aa).

77–90 lines the NAD(+) pocket; sequence GPKYDVLDFSVKPE. Positions 97, 107, 135, and 226 each coordinate substrate. Residues D226, D250, and D254 each contribute to the Mg(2+) site. 289–301 is a binding site for NAD(+); it reads GSAPDIAGQGKAN.

The protein belongs to the isocitrate and isopropylmalate dehydrogenases family. LeuB type 1 subfamily. As to quaternary structure, homodimer. Requires Mg(2+) as cofactor. Mn(2+) is required as a cofactor.

The protein resides in the cytoplasm. It carries out the reaction (2R,3S)-3-isopropylmalate + NAD(+) = 4-methyl-2-oxopentanoate + CO2 + NADH. The protein operates within amino-acid biosynthesis; L-leucine biosynthesis; L-leucine from 3-methyl-2-oxobutanoate: step 3/4. In terms of biological role, catalyzes the oxidation of 3-carboxy-2-hydroxy-4-methylpentanoate (3-isopropylmalate) to 3-carboxy-4-methyl-2-oxopentanoate. The product decarboxylates to 4-methyl-2 oxopentanoate. This is 3-isopropylmalate dehydrogenase from Cereibacter sphaeroides (strain ATCC 17023 / DSM 158 / JCM 6121 / CCUG 31486 / LMG 2827 / NBRC 12203 / NCIMB 8253 / ATH 2.4.1.) (Rhodobacter sphaeroides).